A 258-amino-acid polypeptide reads, in one-letter code: Ribosomal RNA small subunit methyltransferase A (258 aa).

Residues histidine 13, leucine 15, glycine 40, glutamate 61, aspartate 86, and asparagine 106 each contribute to the S-adenosyl-L-methionine site.

The protein belongs to the class I-like SAM-binding methyltransferase superfamily. rRNA adenine N(6)-methyltransferase family. RsmA subfamily.

It localises to the cytoplasm. It catalyses the reaction adenosine(1518)/adenosine(1519) in 16S rRNA + 4 S-adenosyl-L-methionine = N(6)-dimethyladenosine(1518)/N(6)-dimethyladenosine(1519) in 16S rRNA + 4 S-adenosyl-L-homocysteine + 4 H(+). In terms of biological role, specifically dimethylates two adjacent adenosines (A1518 and A1519) in the loop of a conserved hairpin near the 3'-end of 16S rRNA in the 30S particle. May play a critical role in biogenesis of 30S subunits. The polypeptide is Ribosomal RNA small subunit methyltransferase A (Coxiella burnetii (strain RSA 331 / Henzerling II)).